A 938-amino-acid polypeptide reads, in one-letter code: Scm-like with four MBT domains protein 2 (938 aa).

The tract at residues 1–32 is disordered; the sequence is MERYLPVSKKRNSSSSLEKITGSANGNGTLYS. The segment covering 13-30 has biased composition (polar residues); it reads SSSSLEKITGSANGNGTL. 4 MBT repeats span residues 43–143, 151–255, 265–371, and 379–475; these read FSWG…LRPP, SDWT…MDPP, FEWK…LAPP, and FNWV…LTTP. The tract at residues 742–836 is disordered; that stretch reads PEGIPESLPE…TVPTTASSNN (95 aa). 2 stretches are compositionally biased toward basic and acidic residues: residues 765 to 777 and 809 to 822; these read TEQE…DTAR and RNSE…VERA. An SAM domain is found at 868–931; sequence WSVTDVVRFI…CHQIERVKVA (64 aa).

In terms of assembly, interacts with YY1. Interacts with methylated histones H3K9me2 and H4K20me2. In terms of tissue distribution, expressed in testis and, at much lower levels, in ovary.

The protein localises to the nucleus. In terms of biological role, transcriptional repressor of HOXB13 gene. The chain is Scm-like with four MBT domains protein 2 (Sfmbt2) from Mus musculus (Mouse).